We begin with the raw amino-acid sequence, 112 residues long: Macrodomain Ori protein (112 aa).

The interval 91–112 (FHTLSGGKPQVEGAEDYTDSDD) is disordered. Residues 103–112 (GAEDYTDSDD) are compositionally biased toward acidic residues.

Belongs to the MaoP family.

Functionally, involved in the organization of the Ori region of the chromosome into a macrodomain (MD). It constrains DNA mobility in the Ori macrodomain and limits long-distance DNA interactions with other chromosomal regions. The protein is Macrodomain Ori protein of Escherichia coli O157:H7.